A 256-amino-acid polypeptide reads, in one-letter code: Probable aquaporin TIP5-1 (256 aa).

M1 is modified (N-acetylmethionine). The next 5 helical transmembrane spans lie at 24-44 (CYVS…GSVM), 57-77 (PFGV…SVYI), 89-109 (AVTF…MFYW), 144-164 (FGAS…VFTA), and 171-191 (LPLA…VLAA). The NPA 1 motif lies at 87-89 (NPA). An NPA 2 motif is present at residues 200 to 202 (NPA). A helical membrane pass occupies residues 222–242 (VGPLLGGATAALVYDNVVVPV). S249 carries the post-translational modification Phosphoserine.

Belongs to the MIP/aquaporin (TC 1.A.8) family. TIP (TC 1.A.8.10) subfamily.

The protein resides in the membrane. Potential aquaporin, which may facilitate the transport of water and small neutral solutes across cell membranes. This is Probable aquaporin TIP5-1 (TIP5-1) from Arabidopsis thaliana (Mouse-ear cress).